A 182-amino-acid polypeptide reads, in one-letter code: MFKKFEEKDSISSIQQLKSSVQKGIRAKLLEAYPKLESHIDLILPKKDSYRIAKCHDHIELLLNGAGDQVFFRHRDGPWMPTLRLLHKFPYFVTMQQVDKGAIRFVLSGANVMCPGLTSPGACMTPADKDTVVAIMAEGKEHALAVGLLTLSTQEILAKNKGIGIETYHFLNDGLWKSKPVK.

Residues 93–172 (VTMQQVDKGA…IGIETYHFLN (80 aa)) enclose the PUA domain.

It belongs to the MCTS1 family. In terms of assembly, interacts with DENR.

It localises to the cytoplasm. Regulates translation as part of a complex with DENR. Specifically required for translational re-initiation in mRNAs containing upstream open reading frames (uORFs). Not required for standard translational initiation. Regulates expression of a subset of gene products including mbc, InR and EcR. The chain is Malignant T-cell-amplified sequence 1 homolog from Drosophila melanogaster (Fruit fly).